A 404-amino-acid chain; its full sequence is Tryptophan synthase beta chain (404 aa).

The residue at position 90 (K90) is an N6-(pyridoxal phosphate)lysine.

The protein belongs to the TrpB family. As to quaternary structure, tetramer of two alpha and two beta chains. Pyridoxal 5'-phosphate is required as a cofactor.

The catalysed reaction is (1S,2R)-1-C-(indol-3-yl)glycerol 3-phosphate + L-serine = D-glyceraldehyde 3-phosphate + L-tryptophan + H2O. The protein operates within amino-acid biosynthesis; L-tryptophan biosynthesis; L-tryptophan from chorismate: step 5/5. The beta subunit is responsible for the synthesis of L-tryptophan from indole and L-serine. This is Tryptophan synthase beta chain from Geobacillus thermodenitrificans (strain NG80-2).